Reading from the N-terminus, the 541-residue chain is Membrane protein insertase YidC (541 aa).

The next 6 membrane-spanning stretches (helical) occupy residues N6–D26, L325–F345, F349–F369, G420–L440, L457–M477, and V500–G520.

Belongs to the OXA1/ALB3/YidC family. Type 1 subfamily. In terms of assembly, interacts with the Sec translocase complex via SecD. Specifically interacts with transmembrane segments of nascent integral membrane proteins during membrane integration.

Its subcellular location is the cell inner membrane. Required for the insertion and/or proper folding and/or complex formation of integral membrane proteins into the membrane. Involved in integration of membrane proteins that insert both dependently and independently of the Sec translocase complex, as well as at least some lipoproteins. Aids folding of multispanning membrane proteins. The protein is Membrane protein insertase YidC of Shewanella sp. (strain W3-18-1).